The sequence spans 584 residues: Arginine--tRNA ligase (584 aa).

Residues 125 to 135 (PNIAKEMHVGH) carry the 'HIGH' region motif.

It belongs to the class-I aminoacyl-tRNA synthetase family. In terms of assembly, monomer.

The protein localises to the cytoplasm. It catalyses the reaction tRNA(Arg) + L-arginine + ATP = L-arginyl-tRNA(Arg) + AMP + diphosphate. The sequence is that of Arginine--tRNA ligase from Thermosynechococcus vestitus (strain NIES-2133 / IAM M-273 / BP-1).